Consider the following 379-residue polypeptide: MKRNSINIHHVTSFSSSPFWCVFFLVLLCKTSTNALVKQPPNETTPAIIVFGDSIVDAGNNDDIMTTLARCNYPPYGIDFDGGIPTGRFCNGKVATDFIAGKFGIKPSIPAYRNPNLKPEDLLTGVTFASGGAGYVPFTTQLSTYLFIYKPLLFLKGGIALSQQLKLFEEYVEKMKKMVGEERTKLIIKNSLFMVICGSNDITNTYFGLPSVQQQYDVASFTTLMADNARSFAQKLHEYGARRIQVFGAPPVGCVPSQRTLAGGPTRNCVVRFNDATKLYNVKLAANLGSLSRTLGDKTIIYVDIYDSLLDIILDPRQYGFKVVDKGCCGTGLIEVALLCNNFAADVCPNRDEYVFWDSFHPTEKTYRIMATKYFERYV.

The N-terminal stretch at methionine 1–alanine 35 is a signal peptide. A glycan (N-linked (GlcNAc...) asparagine) is linked at asparagine 42. The Nucleophile role is filled by serine 54. Catalysis depends on residues aspartate 358 and histidine 361.

This sequence belongs to the 'GDSL' lipolytic enzyme family.

The protein resides in the secreted. The protein is GDSL esterase/lipase EXL2 (EXL2) of Arabidopsis thaliana (Mouse-ear cress).